An 864-amino-acid polypeptide reads, in one-letter code: DNA double-strand break repair Rad50 ATPase (864 aa).

ATP contacts are provided by residues 32–38 and Gln-131; that span reads NGAGKSS. Coiled coils occupy residues 176 to 319 and 376 to 413; these read RELD…EKAI and DIDK…EKNE. The region spanning 380–478 is the Zinc-hook domain; the sequence is VNSLEQKVEE…ELNKIEREYR (99 aa). The Zn(2+) site is built by Cys-426 and Cys-429. Residues 440–697 are a coiled coil; that stretch reads KIIKEAKSYI…DREKIINAIN (258 aa).

This sequence belongs to the SMC family. RAD50 subfamily. Homodimer. Forms a heterotetramer composed of two Mre11 subunits and two Rad50 subunits. Zn(2+) serves as cofactor.

In terms of biological role, part of the Rad50/Mre11 complex, which is involved in the early steps of DNA double-strand break (DSB) repair. The complex may facilitate opening of the processed DNA ends to aid in the recruitment of HerA and NurA. Rad50 controls the balance between DNA end bridging and DNA resection via ATP-dependent structural rearrangements of the Rad50/Mre11 complex. The polypeptide is DNA double-strand break repair Rad50 ATPase (Saccharolobus solfataricus (strain ATCC 35092 / DSM 1617 / JCM 11322 / P2) (Sulfolobus solfataricus)).